Here is a 93-residue protein sequence, read N- to C-terminus: Large ribosomal subunit protein bL27 (93 aa).

The propeptide occupies 1-10 (MLLKLQIQLF).

It belongs to the bacterial ribosomal protein bL27 family. Post-translationally, the N-terminus is cleaved by ribosomal processing cysteine protease Prp.

In Phytoplasma australiense, this protein is Large ribosomal subunit protein bL27.